The sequence spans 216 residues: Serine acetyltransferase (216 aa).

This sequence belongs to the transferase hexapeptide repeat family.

Its subcellular location is the cytoplasm. The catalysed reaction is L-serine + acetyl-CoA = O-acetyl-L-serine + CoA. It participates in amino-acid biosynthesis; L-cysteine biosynthesis; L-cysteine from L-serine: step 1/2. The protein is Serine acetyltransferase (cysE) of Staphylococcus xylosus.